The primary structure comprises 344 residues: Oxygen sensor histidine kinase NreB (344 aa).

4 residues coordinate [4Fe-4S] cluster: C58, C61, C73, and C76. A Histidine kinase domain is found at E147–V344. Phosphohistidine; by autocatalysis is present on H158.

The cofactor is [4Fe-4S] cluster. Autophosphorylated.

It localises to the cytoplasm. The catalysed reaction is ATP + protein L-histidine = ADP + protein N-phospho-L-histidine.. Member of the two-component regulatory system NreB/NreC involved in the control of dissimilatory nitrate/nitrite reduction in response to oxygen. NreB functions as a direct oxygen sensor histidine kinase which is autophosphorylated, in the absence of oxygen, probably at the conserved histidine residue, and transfers its phosphate group probably to a conserved aspartate residue of NreC. NreB/NreC activates the expression of the nitrate (narGHJI) and nitrite (nir) reductase operons, as well as the putative nitrate transporter gene narT. This Staphylococcus haemolyticus (strain JCSC1435) protein is Oxygen sensor histidine kinase NreB (nreB).